The chain runs to 415 residues: Peptide chain release factor subunit 1 (415 aa).

The protein belongs to the eukaryotic release factor 1 family. As to quaternary structure, heterodimer of two subunits, one of which binds GTP.

It localises to the cytoplasm. In terms of biological role, directs the termination of nascent peptide synthesis (translation) in response to the termination codons UAA, UAG and UGA. The protein is Peptide chain release factor subunit 1 of Thermococcus onnurineus (strain NA1).